Consider the following 493-residue polypeptide: Zinc finger CCCH domain-containing protein 34 (493 aa).

C3H1-type zinc fingers lie at residues 14–43, 45–71, and 91–118; these read RRCN…HADG, RFNR…HPPL, and VKAA…HEPL. A disordered region spans residues 397 to 477; sequence MGECPQPANH…SFSDDFEGPK (81 aa). Residues 409 to 420 show a composition bias toward basic residues; it reads FRGRRKKNRGKQ. Over residues 452–468 the composition is skewed to polar residues; the sequence is SNSSFSHSTACTPNVRS.

In Oryza sativa subsp. japonica (Rice), this protein is Zinc finger CCCH domain-containing protein 34.